The following is a 141-amino-acid chain: Ribonuclease P protein component (141 aa).

2 disordered regions span residues 37–56 (RTEE…VGFT) and 114–141 (RRIT…VNGK). The segment covering 114–123 (RRITAKGERR) has biased composition (basic and acidic residues).

The protein belongs to the RnpA family. As to quaternary structure, consists of a catalytic RNA component (M1 or rnpB) and a protein subunit.

It catalyses the reaction Endonucleolytic cleavage of RNA, removing 5'-extranucleotides from tRNA precursor.. Functionally, RNaseP catalyzes the removal of the 5'-leader sequence from pre-tRNA to produce the mature 5'-terminus. It can also cleave other RNA substrates such as 4.5S RNA. The protein component plays an auxiliary but essential role in vivo by binding to the 5'-leader sequence and broadening the substrate specificity of the ribozyme. The sequence is that of Ribonuclease P protein component from Brucella suis biovar 1 (strain 1330).